A 341-amino-acid chain; its full sequence is MNKDFIELDGAIGGGQILRSALSLSMLTGKPFRIHNIRAKRSRPGLLRQHLTAVTAAAQISSADAEGTQIGSQSLSFAPGAIRGGDYEFAIGTAGSCSLVVQTLLPALLHADQPSRVRISGGTHNPLAPPFEFLERAWLPLLKRMGAQVEIELLRHGFAPAGGGALVMQVTPSALRPLHLETPGPIHSQQATALVADVPGHVAERELARVGKRLKWPEQALKGIWLDKQIGPGNVLLLEIACGEVTELFSSIGQSGVRAERVADQAVDQARQWLHSGAAVDEHLADQLLLPLAMAGGGSFSTTHMSEHLSSNIQVIRQFLNVEIVCTQANERILRVELRQG.

ATP is bound by residues Q102 and H283 to Q287. Residue H308 is the Tele-AMP-histidine intermediate of the active site.

This sequence belongs to the RNA 3'-terminal cyclase family. Type 1 subfamily.

It is found in the cytoplasm. It catalyses the reaction a 3'-end 3'-phospho-ribonucleotide-RNA + ATP = a 3'-end 2',3'-cyclophospho-ribonucleotide-RNA + AMP + diphosphate. In terms of biological role, catalyzes the conversion of 3'-phosphate to a 2',3'-cyclic phosphodiester at the end of RNA. The mechanism of action of the enzyme occurs in 3 steps: (A) adenylation of the enzyme by ATP; (B) transfer of adenylate to an RNA-N3'P to produce RNA-N3'PP5'A; (C) and attack of the adjacent 2'-hydroxyl on the 3'-phosphorus in the diester linkage to produce the cyclic end product. The biological role of this enzyme is unknown but it is likely to function in some aspects of cellular RNA processing. This is RNA 3'-terminal phosphate cyclase from Ectopseudomonas mendocina (strain ymp) (Pseudomonas mendocina).